We begin with the raw amino-acid sequence, 256 residues long: Thiazole synthase (256 aa).

Lys-96 functions as the Schiff-base intermediate with DXP in the catalytic mechanism. Residues Gly-157, Ala-184 to Gly-185, and Asn-206 to Thr-207 each bind 1-deoxy-D-xylulose 5-phosphate.

The protein belongs to the ThiG family. Homotetramer. Forms heterodimers with either ThiH or ThiS.

The protein resides in the cytoplasm. The catalysed reaction is [ThiS sulfur-carrier protein]-C-terminal-Gly-aminoethanethioate + 2-iminoacetate + 1-deoxy-D-xylulose 5-phosphate = [ThiS sulfur-carrier protein]-C-terminal Gly-Gly + 2-[(2R,5Z)-2-carboxy-4-methylthiazol-5(2H)-ylidene]ethyl phosphate + 2 H2O + H(+). It participates in cofactor biosynthesis; thiamine diphosphate biosynthesis. Catalyzes the rearrangement of 1-deoxy-D-xylulose 5-phosphate (DXP) to produce the thiazole phosphate moiety of thiamine. Sulfur is provided by the thiocarboxylate moiety of the carrier protein ThiS. In vitro, sulfur can be provided by H(2)S. The polypeptide is Thiazole synthase (Brucella canis (strain ATCC 23365 / NCTC 10854 / RM-666)).